The primary structure comprises 130 residues: Large ribosomal subunit protein uL14 (130 aa).

This sequence belongs to the universal ribosomal protein uL14 family. Part of the 50S ribosomal subunit. Forms a cluster with proteins L3 and L19. In the 70S ribosome, L14 and L19 interact and together make contacts with the 16S rRNA in bridges B5 and B8.

Binds to 23S rRNA. Forms part of two intersubunit bridges in the 70S ribosome. In Helicobacter pylori (strain P12), this protein is Large ribosomal subunit protein uL14.